We begin with the raw amino-acid sequence, 210 residues long: MARSKSSGRWLKEHHSDVFVLKAREEGFRSRAVYKLKEIQEKDRIIRPNMTVVELGAAPGGWSQYVAGILNGRGRMIALDILPMDALPDVHFIQGDFREETVLNALYDIIGEGNYVDLVISDMAPNTSGIKSVDQARSMHLVELAADFAQERLVAGGDFLCKVFHGAGFDALFQHLKTQFSTVLTRKPQASRARSQETYLLARGFIRSAE.

S-adenosyl-L-methionine-binding residues include glycine 60, tryptophan 62, aspartate 80, aspartate 96, and aspartate 122. The Proton acceptor role is filled by lysine 162.

The protein belongs to the class I-like SAM-binding methyltransferase superfamily. RNA methyltransferase RlmE family.

The protein resides in the cytoplasm. The enzyme catalyses uridine(2552) in 23S rRNA + S-adenosyl-L-methionine = 2'-O-methyluridine(2552) in 23S rRNA + S-adenosyl-L-homocysteine + H(+). Its function is as follows. Specifically methylates the uridine in position 2552 of 23S rRNA at the 2'-O position of the ribose in the fully assembled 50S ribosomal subunit. The protein is Ribosomal RNA large subunit methyltransferase E of Dichelobacter nodosus (strain VCS1703A).